A 376-amino-acid polypeptide reads, in one-letter code: Heat stress transcription factor A-2a (376 aa).

Residues 137–168 (LKTIKRRRPPPSSPPSSSSSSSSSQHQQQPAA) are disordered. Residues 151-160 (PSSSSSSSSS) show a composition bias toward low complexity. Residues 182–229 (VNRLQRDKSVLIAEVVKLRQEQQTTRAQMQAMEERISAAEQKQQQMTV) are a coiled coil. The tract at residues 185–235 (LQRDKSVLIAEVVKLRQEQQTTRAQMQAMEERISAAEQKQQQMTVFLARAM) is hydrophobic repeat HR-A/B. The Nuclear localization signal signature appears at 265–269 (KKRRR). 2 disordered regions span residues 296-319 (VAEPDGDTTPRGDGGGGGGGDTES) and 332-362 (KQREDGVAGGVQESNSGGADVDNDEEDDDDD). Residues 307–316 (GDGGGGGGGD) show a composition bias toward gly residues. The short motif at 318-325 (ESFWMQLL) is the AHA element. Acidic residues predominate over residues 352–362 (VDNDEEDDDDD). The Nuclear export signal signature appears at 366 to 373 (LVQSIYHL).

It belongs to the HSF family. Class A subfamily. In terms of assembly, homotrimer. In terms of processing, exhibits temperature-dependent phosphorylation.

Its subcellular location is the cytoplasm. The protein resides in the nucleus. Functionally, transcriptional regulator that specifically binds DNA of heat shock promoter elements (HSE). This is Heat stress transcription factor A-2a (HSFA2A) from Oryza sativa subsp. japonica (Rice).